The sequence spans 750 residues: GTP pyrophosphokinase rsh (750 aa).

The HD domain occupies Y45–M144. In terms of domain architecture, TGS spans D390 to R451. A disordered region spans residues A587 to L613. The ACT domain occupies R676 to G750.

Belongs to the RelA/SpoT family.

The enzyme catalyses GTP + ATP = guanosine 3'-diphosphate 5'-triphosphate + AMP. Its function is as follows. Functions as a (p)ppGpp synthase. In eubacteria ppGpp (guanosine 3'-diphosphate 5'-diphosphate) is a mediator of the stringent response that coordinates a variety of cellular activities in response to changes in nutritional abundance. It is necessary for persistence in mice, essential for intracellular growth of Brucella and required for expression of the type IV secretion system VirB and therefore plays a role in adaptation of Brucella to its intracellular host environment. The protein is GTP pyrophosphokinase rsh (rsh) of Brucella suis biovar 1 (strain 1330).